The primary structure comprises 236 residues: Biosynthetic peptidoglycan transglycosylase (236 aa).

Residues 12-31 (ALLWFAAGSVLVVLVLRWVP) traverse the membrane as a helical segment.

Belongs to the glycosyltransferase 51 family.

It is found in the cell inner membrane. The enzyme catalyses [GlcNAc-(1-&gt;4)-Mur2Ac(oyl-L-Ala-gamma-D-Glu-L-Lys-D-Ala-D-Ala)](n)-di-trans,octa-cis-undecaprenyl diphosphate + beta-D-GlcNAc-(1-&gt;4)-Mur2Ac(oyl-L-Ala-gamma-D-Glu-L-Lys-D-Ala-D-Ala)-di-trans,octa-cis-undecaprenyl diphosphate = [GlcNAc-(1-&gt;4)-Mur2Ac(oyl-L-Ala-gamma-D-Glu-L-Lys-D-Ala-D-Ala)](n+1)-di-trans,octa-cis-undecaprenyl diphosphate + di-trans,octa-cis-undecaprenyl diphosphate + H(+). It participates in cell wall biogenesis; peptidoglycan biosynthesis. Functionally, peptidoglycan polymerase that catalyzes glycan chain elongation from lipid-linked precursors. This Pseudomonas syringae pv. syringae (strain B728a) protein is Biosynthetic peptidoglycan transglycosylase.